A 315-amino-acid chain; its full sequence is Homoserine O-succinyltransferase (315 aa).

Cys-142 functions as the Acyl-thioester intermediate in the catalytic mechanism. Positions 163 and 192 each coordinate substrate. His-235 functions as the Proton acceptor in the catalytic mechanism. Glu-237 is an active-site residue. Arg-249 serves as a coordination point for substrate. Basic and acidic residues predominate over residues 249 to 258 (RDCEKSDNAP). Residues 249 to 271 (RDCEKSDNAPKPENYFPDDDATK) form a disordered region.

It belongs to the MetA family.

It is found in the cytoplasm. The enzyme catalyses L-homoserine + succinyl-CoA = O-succinyl-L-homoserine + CoA. The protein operates within amino-acid biosynthesis; L-methionine biosynthesis via de novo pathway; O-succinyl-L-homoserine from L-homoserine: step 1/1. Transfers a succinyl group from succinyl-CoA to L-homoserine, forming succinyl-L-homoserine. This Pseudoalteromonas translucida (strain TAC 125) protein is Homoserine O-succinyltransferase.